Consider the following 542-residue polypeptide: Hydroxylamine reductase (542 aa).

4 residues coordinate [4Fe-4S] cluster: cysteine 3, cysteine 6, cysteine 15, and cysteine 21. Positions 243, 267, 311, 398, 426, 451, 485, and 487 each coordinate hybrid [4Fe-2O-2S] cluster. Cysteine persulfide is present on cysteine 398.

This sequence belongs to the HCP family. [4Fe-4S] cluster is required as a cofactor. It depends on hybrid [4Fe-2O-2S] cluster as a cofactor.

It is found in the cytoplasm. The catalysed reaction is A + NH4(+) + H2O = hydroxylamine + AH2 + H(+). Functionally, catalyzes the reduction of hydroxylamine to form NH(3) and H(2)O. The protein is Hydroxylamine reductase of Syntrophobacter fumaroxidans (strain DSM 10017 / MPOB).